Consider the following 191-residue polypeptide: MQSIKCVVVGDGAVGKTCLLICYTTNAFPKEYIPTVFDNYSAQSAVDGRTVNLNLWDTAGQEEYDRLRTLSYPQTNVFVICFSIASPPSYENVRHKWHPEVCHHCPDVPILLVGTKKDLRAQPDTLRRLKEQGQAPITPQQGQALAKQIHAVRYLECSALQQDGVKEVFAEAVRAVLNPTPIKRGRSCILL.

Residue 10–17 coordinates GTP; that stretch reads GDGAVGKT. Positions 32 to 40 match the Effector region motif; that stretch reads YIPTVFDNY. Residues 57-61 and 115-118 contribute to the GTP site; these read DTAGQ and TKKD. Phosphothreonine is present on residues Thr138 and Thr180. Cys188 is modified (cysteine methyl ester). A lipid anchor (S-geranylgeranyl cysteine) is attached at Cys188. Residues 189-191 constitute a propeptide, removed in mature form; the sequence is ILL.

It belongs to the small GTPase superfamily. Rho family. In terms of assembly, interacts with ARHGEF26. Interacts with ARHGEF16. Interacts with UNC13D; the interaction increases RhoG affinity to the membrane lipids, targets UNC13D to membrane lipids and facilitates cytotoxic granule (CG) docking to the plasma membrane.

It localises to the cell membrane. Its function is as follows. Plays a role in immunological synaptic F-actin density and architecture organization. Regulates actin reorganization in lymphocytes, possibly through the modulation of Rac1 activity. Required for the formation of membrane ruffles during macropinocytosis. Plays a role in cell migration and is required for the formation of cup-like structures during trans-endothelial migration of leukocytes. Binds phospholipids in an activation-dependent manner; thereby acting as an anchor for other proteins to the plasma membrane (PM). Plays a role in exocytosis of cytotoxic granules (CG) by lymphocytes/Component of the exocytosis machinery in natural killer (NK) and CD8+ T cells. Promotes the docking of cytotoxic granules (CG) to the plasma membrane through the interaction with UNC13D. Involved in the cytotoxic activity of lymphocytes/primary CD8+ T cells. The polypeptide is Rho-related GTP-binding protein RhoG (RHOG) (Cricetus cricetus (Black-bellied hamster)).